Reading from the N-terminus, the 1179-residue chain is Protein turtle homolog A (1179 aa).

The first 20 residues, 1 to 20, serve as a signal peptide directing secretion; that stretch reads MIWCLRLTVLSLIISQGADG. Over 21 to 734 the chain is Extracellular; sequence RRKPEVVSVV…TQLPGLLPQP (714 aa). Ig-like domains follow at residues 24–124, 136–216, 226–318, 322–410, and 418–502; these read PEVV…DFAN, PQFQ…GSIT, PPVI…AYLT, PAQV…SPVT, and PAFI…TNVY. Cystine bridges form between Cys-41/Cys-108 and Cys-158/Cys-206. Residues Asn-188, Asn-239, and Asn-256 are each glycosylated (N-linked (GlcNAc...) asparagine). 3 cysteine pairs are disulfide-bonded: Cys-248–Cys-301, Cys-344–Cys-395, and Cys-440–Cys-486. Fibronectin type-III domains are found at residues 507–611 and 623–718; these read SPHV…TTPA and PLSP…TSGL. N-linked (GlcNAc...) asparagine glycans are attached at residues Asn-513 and Asn-524. A helical membrane pass occupies residues 735–755; that stretch reads VLAGVVGGVCFLGVAVLVSIL. Residues 756–1179 lie on the Cytoplasmic side of the membrane; sequence AACLMNRRRA…ISYPEQATLL (424 aa). Positions 767–807 are disordered; that stretch reads RRHRKRLRQDPPLIFSPRGKSGSHSAPGSGSPDSVTKFKLQ. Positions 785 to 800 are enriched in low complexity; that stretch reads GKSGSHSAPGSGSPDS. The residue at position 809 (Ser-809) is a Phosphoserine. Disordered stretches follow at residues 819 to 842, 942 to 974, and 1016 to 1079; these read LWGE…PLPL, PPLE…DSPP, and APRG…KRRN. Pro residues predominate over residues 944–954; that stretch reads LEEPTPAPPPD. The segment covering 1020–1029 has biased composition (polar residues); sequence SLTSQSSGRG. Residues 1177 to 1179 carry the PDZ-binding motif; that stretch reads TLL.

It belongs to the immunoglobulin superfamily. Turtle family. In terms of assembly, interacts with MAGI2 and SHANK1. In terms of tissue distribution, expressed in both cell bodies and dendrites of cortical and hippocampal neurons and also cerebellar Purkinje cells (at protein level).

It localises to the cell membrane. The protein localises to the synapse. In terms of biological role, functions in dendrite outgrowth and synapse maturation. The sequence is that of Protein turtle homolog A (Igsf9) from Mus musculus (Mouse).